The primary structure comprises 385 residues: S-adenosylmethionine synthase (385 aa).

His16 provides a ligand contact to ATP. Asp18 contacts Mg(2+). Glu44 contacts K(+). 2 residues coordinate L-methionine: Glu57 and Gln100. Residues 100-110 (QSPDINQGVDR) form a flexible loop region. ATP contacts are provided by residues 164-166 (DGK), 230-231 (KF), Asp239, 245-246 (RK), Ala262, and Lys266. Residue Asp239 coordinates L-methionine. Residue Lys270 participates in L-methionine binding.

Belongs to the AdoMet synthase family. As to quaternary structure, homotetramer; dimer of dimers. It depends on Mg(2+) as a cofactor. The cofactor is K(+).

The protein localises to the cytoplasm. The enzyme catalyses L-methionine + ATP + H2O = S-adenosyl-L-methionine + phosphate + diphosphate. It participates in amino-acid biosynthesis; S-adenosyl-L-methionine biosynthesis; S-adenosyl-L-methionine from L-methionine: step 1/1. Functionally, catalyzes the formation of S-adenosylmethionine (AdoMet) from methionine and ATP. The overall synthetic reaction is composed of two sequential steps, AdoMet formation and the subsequent tripolyphosphate hydrolysis which occurs prior to release of AdoMet from the enzyme. This chain is S-adenosylmethionine synthase, found in Helicobacter pylori (strain ATCC 700392 / 26695) (Campylobacter pylori).